The primary structure comprises 189 residues: Phosphomevalonate kinase (189 aa).

ATP contacts are provided by residues 10-16 (KRKCGKD) and R138. N168 contacts substrate.

It localises to the cytoplasm. It is found in the cytosol. The enzyme catalyses (R)-5-phosphomevalonate + ATP = (R)-5-diphosphomevalonate + ADP. The protein operates within isoprenoid biosynthesis; isopentenyl diphosphate biosynthesis via mevalonate pathway; isopentenyl diphosphate from (R)-mevalonate: step 2/3. The protein is Phosphomevalonate kinase of Drosophila melanogaster (Fruit fly).